The primary structure comprises 251 residues: MINFSNTLVILNNDVPCELLKKKYSELLIPTISILDFKKKKIYKKYNNIFLYSYQNYSFLLDLNDNILLKIQKYLNKNGILDINLYLNDKNNNNNSGTNKKDHSKIEDISQILKKLRKECLYNGYINISTEQTTSENGIVINIKAENPDFNKSDDDNNLVSSDEEIYEKCEDKKKVVNRVCDNCTCGKKEKAMNLEKIKINDNEVEYSTENVVSSCGNCYLGDAFRCGSCPYKGLPAFQPGENVKLNLNVC.

An N-terminal SAM-like domain region spans residues 1-154 (MINFSNTLVI…AENPDFNKSD (154 aa)). Residues 155-167 (DDNNLVSSDEEIY) are linker. Residues cysteine 170, cysteine 181, cysteine 184, and cysteine 186 each coordinate [2Fe-2S] cluster. Residues 170–186 (CEDKKKVVNRVCDNCTC) form a fe-S binding site A region. [4Fe-4S] cluster-binding residues include cysteine 216, cysteine 219, cysteine 227, and cysteine 230. 2 short sequence motifs (cx2C motif) span residues 216–219 (CGNC) and 227–230 (CGSC). The fe-S binding site B stretch occupies residues 216 to 230 (CGNCYLGDAFRCGSC).

Belongs to the anamorsin family. As to quaternary structure, monomer. Requires [2Fe-2S] cluster as cofactor. [4Fe-4S] cluster serves as cofactor.

The protein localises to the cytoplasm. It localises to the mitochondrion intermembrane space. Its function is as follows. Component of the cytosolic iron-sulfur (Fe-S) protein assembly (CIA) machinery. Required for the maturation of extramitochondrial Fe-S proteins. Part of an electron transfer chain functioning in an early step of cytosolic Fe-S biogenesis, facilitating the de novo assembly of a [4Fe-4S] cluster on the cytosolic Fe-S scaffold complex. Electrons are transferred from NADPH via a FAD- and FMN-containing diflavin oxidoreductase. Together with the diflavin oxidoreductase, also required for the assembly of the diferric tyrosyl radical cofactor of ribonucleotide reductase (RNR), probably by providing electrons for reduction during radical cofactor maturation in the catalytic small subunit. This Plasmodium yoelii yoelii protein is Anamorsin homolog.